We begin with the raw amino-acid sequence, 200 residues long: Putative NAD(P)H nitroreductase Spy0809 (200 aa).

Requires FMN as cofactor.

In Streptococcus pyogenes serotype M6 (strain ATCC BAA-946 / MGAS10394), this protein is Putative NAD(P)H nitroreductase Spy0809.